We begin with the raw amino-acid sequence, 245 residues long: Probable phosphatase YcdX (245 aa).

Zn(2+) is bound by residues H7, H9, H15, H40, E73, H101, H131, D192, and H194.

Belongs to the PHP family. In terms of assembly, homotrimer. The cofactor is Zn(2+).

The polypeptide is Probable phosphatase YcdX (Shigella flexneri serotype 5b (strain 8401)).